Here is a 221-residue protein sequence, read N- to C-terminus: Urease accessory protein UreE (221 aa).

Residues 160–194 are disordered; sequence VPGTNKTTGDLAEEEQETERHEPHAHAIGEHHHEK. The segment covering 177-194 has biased composition (basic and acidic residues); the sequence is TERHEPHAHAIGEHHHEK.

The protein belongs to the UreE family.

It is found in the cytoplasm. Functionally, involved in urease metallocenter assembly. Binds nickel. Probably functions as a nickel donor during metallocenter assembly. This chain is Urease accessory protein UreE, found in Bifidobacterium longum subsp. infantis (strain ATCC 15697 / DSM 20088 / JCM 1222 / NCTC 11817 / S12).